A 519-amino-acid chain; its full sequence is 2-isopropylmalate synthase (519 aa).

Residues 12–274 enclose the Pyruvate carboxyltransferase domain; it reads VVIFDTTLRD…WCNVESTTLT (263 aa). Positions 21, 209, 211, and 245 each coordinate Mn(2+). Positions 398-519 are regulatory domain; it reads RLVSLTVIAG…QREAPVAAAS (122 aa).

It belongs to the alpha-IPM synthase/homocitrate synthase family. LeuA type 1 subfamily. Homodimer. Requires Mn(2+) as cofactor.

It is found in the cytoplasm. It carries out the reaction 3-methyl-2-oxobutanoate + acetyl-CoA + H2O = (2S)-2-isopropylmalate + CoA + H(+). Its pathway is amino-acid biosynthesis; L-leucine biosynthesis; L-leucine from 3-methyl-2-oxobutanoate: step 1/4. Functionally, catalyzes the condensation of the acetyl group of acetyl-CoA with 3-methyl-2-oxobutanoate (2-ketoisovalerate) to form 3-carboxy-3-hydroxy-4-methylpentanoate (2-isopropylmalate). This Afipia carboxidovorans (strain ATCC 49405 / DSM 1227 / KCTC 32145 / OM5) (Oligotropha carboxidovorans) protein is 2-isopropylmalate synthase.